The following is an 847-amino-acid chain: DNA mismatch repair protein MutS (847 aa).

602 to 609 (GPNMSGKS) contributes to the ATP binding site. The tract at residues 788–807 (EKREASLPASRTDSQKVSEQ) is disordered. The segment covering 796 to 807 (ASRTDSQKVSEQ) has biased composition (polar residues).

It belongs to the DNA mismatch repair MutS family.

Its function is as follows. This protein is involved in the repair of mismatches in DNA. It is possible that it carries out the mismatch recognition step. This protein has a weak ATPase activity. The polypeptide is DNA mismatch repair protein MutS (Streptococcus gordonii (strain Challis / ATCC 35105 / BCRC 15272 / CH1 / DL1 / V288)).